The sequence spans 271 residues: Proteasome inhibitor PI31 subunit (271 aa).

Ala2 carries the post-translational modification N-acetylalanine. The segment at 2–150 is important for homodimerization and interaction with FBXO7; it reads AGLEVLFASA…PIHEQWEKVR (149 aa). 2 positions are modified to phosphoserine: Ser153 and Ser189. Arg205 carries the omega-N-methylarginine modification. An Asymmetric dimethylarginine modification is found at Arg219. Positions 221–271 are disordered; the sequence is LIDPSSGLPNRLPPGAVPPGARFDPFGPIGTSPSGPNPDHLPPPGYDDMYL. At Arg231 the chain carries Omega-N-methylarginine. Ser252 is subject to Phosphoserine. A compositionally biased stretch (pro residues) spans 255–265; that stretch reads GPNPDHLPPPG.

This sequence belongs to the proteasome inhibitor PI31 family. In terms of assembly, monomer and homodimer. Interacts with FBXO7.

The protein localises to the cytoplasm. The protein resides in the endoplasmic reticulum. In terms of biological role, plays an important role in control of proteasome function. Inhibits the hydrolysis of protein and peptide substrates by the 20S proteasome. Also inhibits the activation of the proteasome by the proteasome regulatory proteins PA700 and PA28. The sequence is that of Proteasome inhibitor PI31 subunit (Psmf1) from Rattus norvegicus (Rat).